The chain runs to 5121 residues: Hydrocephalus-inducing protein homolog (5121 aa).

The interaction with KIF9 stretch occupies residues 363–754 (EFFEECITDP…VLFSSPTPSG (392 aa)). Basic residues predominate over residues 956–967 (LSKKGRVKKGHA). Disordered stretches follow at residues 956–987 (LSKKGRVKKGHAHVQPQPSGSQEPRDPQSPVF), 1925–1951 (LAQENEEEDITSSDQGTSNSTKRTSLS), 2155–2186 (SKADSHGSGSQKQHHSHQSETPQISSSPLPPG), 2333–2459 (EQER…KFKT), 2482–2534 (LPPA…AERE), 2664–2684 (TNTTKAQEEQTSSSKGGKQKM), and 3852–3874 (KPDHQGSAQKDQLSQGTMHTGST). Residues 1908–1933 (EIKKSKEEQMRAKYLENLAQENEEED) are a coiled coil. Residues 1936-1951 (SSDQGTSNSTKRTSLS) are compositionally biased toward polar residues. The stretch at 2267–2365 (AQDYAAMKAQ…EDELKRRVKK (99 aa)) forms a coiled coil. Composition is skewed to basic and acidic residues over residues 2333–2360 (EQERLAKEMQEKKLQQELERQKEEDELK), 2393–2418 (VDVKMETIERKISVREQTMSEKEELN), 2444–2453 (DNSKDPDKQL), 2489–2498 (EAPHEPDDQR), and 2509–2534 (KDRERERLEKERTEKERLEREKAERE). A coiled-coil region spans residues 2504–2549 (GRRGRKDRERERLEKERTEKERLEREKAERERLEKLRALEERSDWE). Polar residues-rich tracts occupy residues 2664–2679 (TNTTKAQEEQTSSSKG) and 3857–3874 (GSAQKDQLSQGTMHTGST).

In terms of assembly, interacts with KIF9.

Its subcellular location is the cell projection. The protein resides in the cilium. It localises to the cytoplasm. It is found in the cytoskeleton. The protein localises to the cilium axoneme. Its subcellular location is the flagellum. Required for ciliary motility. The chain is Hydrocephalus-inducing protein homolog (HYDIN) from Homo sapiens (Human).